A 419-amino-acid polypeptide reads, in one-letter code: Argininosuccinate synthase (419 aa).

ATP is bound by residues 9 to 17 (AYSGGLDTS) and Ala-35. 2 residues coordinate L-citrulline: Tyr-86 and Ser-91. 114 to 122 (AHGATGKGN) lines the ATP pocket. L-aspartate is bound by residues Thr-118, Asn-122, and Asp-123. Asn-122 provides a ligand contact to L-citrulline. L-citrulline contacts are provided by Arg-126, Ser-179, Ser-188, Glu-270, and Tyr-282.

Belongs to the argininosuccinate synthase family. Type 1 subfamily. In terms of assembly, homotetramer.

The catalysed reaction is L-citrulline + L-aspartate + ATP = 2-(N(omega)-L-arginino)succinate + AMP + diphosphate + H(+). It participates in amino-acid biosynthesis; L-arginine biosynthesis; L-arginine from L-ornithine and carbamoyl phosphate: step 2/3. The protein operates within nitrogen metabolism; urea cycle; (N(omega)-L-arginino)succinate from L-aspartate and L-citrulline: step 1/1. In Drosophila melanogaster (Fruit fly), this protein is Argininosuccinate synthase.